We begin with the raw amino-acid sequence, 329 residues long: MKITLLGAGAWGTALSIAFSGKHDLTLWSREVDVADDLRKTRENHRFFPGYKLPESVAVSTDFEVAVAGAELLVVATPIAGLRPTVERLQALGCKLPVLWVCKGFEAGSGKLPHQVVAEVLGKEALCGALSGPSFAEEVAAGQPTAVSLATNDPAFAREAARQLHTTRLRIYANDDLVGVEVGGAVKNVLAIATGVCDGLGLGLNSRAALMTRGLAEIARLGLALGAERQTFMGLAGMGDLILTCTGDLSRNRRVGLALAQNKSLPQILEELGHVAEGVYTAREVDRLAARLGVEMPISAAVAAVLDGRLTAAQAVEQLMARDPKEELA.

Residues tryptophan 11, arginine 30, and lysine 103 each contribute to the NADPH site. Sn-glycerol 3-phosphate-binding residues include lysine 103, glycine 132, and serine 134. NADPH is bound at residue alanine 136. Residues lysine 187, aspartate 240, serine 250, arginine 251, and asparagine 252 each coordinate sn-glycerol 3-phosphate. Lysine 187 acts as the Proton acceptor in catalysis. Arginine 251 lines the NADPH pocket. 2 residues coordinate NADPH: valine 275 and glutamate 277.

This sequence belongs to the NAD-dependent glycerol-3-phosphate dehydrogenase family.

It is found in the cytoplasm. It catalyses the reaction sn-glycerol 3-phosphate + NAD(+) = dihydroxyacetone phosphate + NADH + H(+). It carries out the reaction sn-glycerol 3-phosphate + NADP(+) = dihydroxyacetone phosphate + NADPH + H(+). It functions in the pathway membrane lipid metabolism; glycerophospholipid metabolism. Functionally, catalyzes the reduction of the glycolytic intermediate dihydroxyacetone phosphate (DHAP) to sn-glycerol 3-phosphate (G3P), the key precursor for phospholipid synthesis. The chain is Glycerol-3-phosphate dehydrogenase [NAD(P)+] from Dechloromonas aromatica (strain RCB).